Consider the following 2237-residue polypeptide: Activating signal cointegrator 1 complex subunit 3-like (2237 aa).

Disordered regions lie at residues 1–48 (MSEE…RGEM), 71–118 (TIEK…KPID), 242–330 (DEEE…SKLI), and 445–472 (EKTIEKTESNKKDVEMKQQQQQQQDEIK). Positions 24 to 37 (ERNRSELKEPKGEP) are enriched in basic and acidic residues. Residues 79-97 (VNSSNDTYSTTKKVKNQNP) are compositionally biased toward polar residues. The span at 105 to 114 (RKSNGNNNNE) shows a compositional bias: low complexity. Residues 242–282 (DEEEEEENLSDFEIRDDDDDDDDVDNNEVDDNNNNDSEAQD) are compositionally biased toward acidic residues. Composition is skewed to basic and acidic residues over residues 312-325 (QKPDTKNTKDDKNN) and 446-460 (KTIEKTESNKKDVEM). Residues 440–468 (TAATTEKTIEKTESNKKDVEMKQQQQQQQ) adopt a coiled-coil conformation. The Helicase ATP-binding 1 domain occupies 561-745 (DCAFKTDNNL…FLRVEPDGVF (185 aa)). An ATP-binding site is contributed by 574–581 (APTSSGKT). The DEAH box motif lies at 687-690 (DEIH). In terms of domain architecture, Helicase C-terminal 1 spans 755–990 (PLEQQYIGIS…TVRDAVNWLG (236 aa)). The region spanning 1050–1356 (STELGKVASH…GAEYSLPISF (307 aa)) is the SEC63 1 domain. A Helicase ATP-binding 2 domain is found at 1407 to 1584 (NCMYQSNDNA…WIGATPQTCY (178 aa)). An ATP-binding site is contributed by 1420-1427 (APTNSGKT). A DEAH box motif is present at residues 1526–1529 (DELH). In terms of domain architecture, Helicase C-terminal 2 spans 1657 to 1832 (TLTKPYLVCE…TITKKQDALD (176 aa)). Positions 1892–2215 (PLNLGIIASY…GCDQEHELNI (324 aa)) constitute an SEC63 2 domain.

Belongs to the helicase family.

This chain is Activating signal cointegrator 1 complex subunit 3-like (ascc3l), found in Dictyostelium discoideum (Social amoeba).